The sequence spans 367 residues: NADH-quinone oxidoreductase subunit D (367 aa).

It belongs to the complex I 49 kDa subunit family. In terms of assembly, NDH-1 is composed of 14 different subunits. Subunits NuoB, C, D, E, F, and G constitute the peripheral sector of the complex.

Its subcellular location is the cell membrane. The catalysed reaction is a quinone + NADH + 5 H(+)(in) = a quinol + NAD(+) + 4 H(+)(out). In terms of biological role, NDH-1 shuttles electrons from NADH, via FMN and iron-sulfur (Fe-S) centers, to quinones in the respiratory chain. The immediate electron acceptor for the enzyme in this species is believed to be ubiquinone. Couples the redox reaction to proton translocation (for every two electrons transferred, four hydrogen ions are translocated across the cytoplasmic membrane), and thus conserves the redox energy in a proton gradient. In Dehalococcoides mccartyi (strain ATCC BAA-2100 / JCM 16839 / KCTC 5957 / BAV1), this protein is NADH-quinone oxidoreductase subunit D.